A 431-amino-acid polypeptide reads, in one-letter code: MPVLIESIGNLERRLTFSVPEDRLESHVDERLREIARAARINGFRAGKVPAKVIEQRFGEKVRAEVLDSLLRETLDSAIRAHSLRLAGAARIDHANEGGLNFVATFEVVPDFGEIDVSKLGVVRRTAKVTDVDIDQMIENLRLQRRTWRVAEHGAQVGYLVALETWSQAGDERLPIEGVEAGSTILGSGVMFEQIERGLEGLSKGDENVLDVTFPDDWRVMQLAGKAVQVHVKVIEVSEPVLLEVNEEFIKSFGVKSGKLEDFRADIRANLERELKGALVSHLRREIGEQLIAAYAHVEMPPRLVEKEARLMLAKQIEQIRLSGRDPTVIPDDAHIGFMDAACKRVLVGLLVGEIAGRNRLRLDPMRVTETLHLIASTYEEPEEVFQMYRNDPKLMEGVQSLVMEEQVIEWIADRAQKTEQVLSFQEAIQQ.

The PPIase FKBP-type domain occupies 158–243 (GYLVALETWS…VIEVSEPVLL (86 aa)).

This sequence belongs to the FKBP-type PPIase family. Tig subfamily.

Its subcellular location is the cytoplasm. The enzyme catalyses [protein]-peptidylproline (omega=180) = [protein]-peptidylproline (omega=0). Its function is as follows. Involved in protein export. Acts as a chaperone by maintaining the newly synthesized protein in an open conformation. Functions as a peptidyl-prolyl cis-trans isomerase. This chain is Trigger factor, found in Xylella fastidiosa (strain M23).